Here is a 293-residue protein sequence, read N- to C-terminus: Elongation factor Ts (293 aa).

The tract at residues 80-83 is involved in Mg(2+) ion dislocation from EF-Tu; that stretch reads TDFV.

Belongs to the EF-Ts family.

It is found in the cytoplasm. In terms of biological role, associates with the EF-Tu.GDP complex and induces the exchange of GDP to GTP. It remains bound to the aminoacyl-tRNA.EF-Tu.GTP complex up to the GTP hydrolysis stage on the ribosome. The polypeptide is Elongation factor Ts (Aeromonas hydrophila subsp. hydrophila (strain ATCC 7966 / DSM 30187 / BCRC 13018 / CCUG 14551 / JCM 1027 / KCTC 2358 / NCIMB 9240 / NCTC 8049)).